We begin with the raw amino-acid sequence, 1115 residues long: Tbc2 translation factor, chloroplastic (1115 aa).

Composition is skewed to low complexity over residues 69-87 (TASV…QLSS) and 163-175 (RRAG…SGRA). 2 disordered regions span residues 69 to 90 (TASV…SKAL) and 163 to 210 (RRAG…SSSS). Over residues 176-186 (RGWGSGPGRNG) the composition is skewed to gly residues. Residues 187–210 (SGSSSVSVNGSGSSSNGSSSSSSS) show a composition bias toward low complexity. 9 consecutive repeat copies span residues 483–521 (LVLE…WVEA), 607–645 (LDLT…WMQA), 685–723 (LAAT…WVGA), 724–763 (LLEE…AARL), 764–803 (MWRS…TQLC), 804–842 (LQAA…WLTR), 843–880 (MLLS…WLRR), 990–1029 (PAAH…QAAW), and 1030–1068 (WAAS…WLQA). Positions 483-1068 (LVLELSRARL…LRPPPEWLQA (586 aa)) are 9 X 38 AA approximate repeats.

Part of a 400 kDa complex which is not stably associated with RNA.

It localises to the plastid. Its subcellular location is the chloroplast stroma. Required for expression of the chloroplast encoded psbC mRNA, most likely for translation initiation. Interacts with the 5'-UTR of psbC. This chain is Tbc2 translation factor, chloroplastic (TBC2), found in Chlamydomonas reinhardtii (Chlamydomonas smithii).